The primary structure comprises 375 residues: Queuine tRNA-ribosyltransferase (375 aa).

Residue aspartate 89 is the Proton acceptor of the active site. Substrate contacts are provided by residues aspartate 89–phenylalanine 93, aspartate 143, glutamine 187, and glycine 214. The interval glycine 245–aspartate 251 is RNA binding. Catalysis depends on aspartate 264, which acts as the Nucleophile. Positions threonine 269–arginine 273 are RNA binding; important for wobble base 34 recognition. Zn(2+)-binding residues include cysteine 302, cysteine 304, cysteine 307, and histidine 333.

Belongs to the queuine tRNA-ribosyltransferase family. In terms of assembly, homodimer. Within each dimer, one monomer is responsible for RNA recognition and catalysis, while the other monomer binds to the replacement base PreQ1. The cofactor is Zn(2+).

It catalyses the reaction 7-aminomethyl-7-carbaguanine + guanosine(34) in tRNA = 7-aminomethyl-7-carbaguanosine(34) in tRNA + guanine. The protein operates within tRNA modification; tRNA-queuosine biosynthesis. Catalyzes the base-exchange of a guanine (G) residue with the queuine precursor 7-aminomethyl-7-deazaguanine (PreQ1) at position 34 (anticodon wobble position) in tRNAs with GU(N) anticodons (tRNA-Asp, -Asn, -His and -Tyr). Catalysis occurs through a double-displacement mechanism. The nucleophile active site attacks the C1' of nucleotide 34 to detach the guanine base from the RNA, forming a covalent enzyme-RNA intermediate. The proton acceptor active site deprotonates the incoming PreQ1, allowing a nucleophilic attack on the C1' of the ribose to form the product. After dissociation, two additional enzymatic reactions on the tRNA convert PreQ1 to queuine (Q), resulting in the hypermodified nucleoside queuosine (7-(((4,5-cis-dihydroxy-2-cyclopenten-1-yl)amino)methyl)-7-deazaguanosine). The protein is Queuine tRNA-ribosyltransferase of Salmonella agona (strain SL483).